Reading from the N-terminus, the 377-residue chain is Chaperone protein DnaJ (377 aa).

Positions 5-70 (DYYEVLGVAK…QKRAAYDRYG (66 aa)) constitute a J domain. Residues 137-215 (GFDTEIRVPS…CDGVGRTRRN (79 aa)) form a CR-type zinc finger. Zn(2+) is bound by residues Cys150, Cys153, Cys167, Cys170, Cys189, Cys192, Cys203, and Cys206. 4 CXXCXGXG motif repeats span residues 150 to 157 (CDTCHGSG), 167 to 174 (CRTCGGSG), 189 to 196 (CPTCHGTG), and 203 to 210 (CPSCDGVG).

The protein belongs to the DnaJ family. Homodimer. It depends on Zn(2+) as a cofactor.

Its subcellular location is the cytoplasm. Participates actively in the response to hyperosmotic and heat shock by preventing the aggregation of stress-denatured proteins and by disaggregating proteins, also in an autonomous, DnaK-independent fashion. Unfolded proteins bind initially to DnaJ; upon interaction with the DnaJ-bound protein, DnaK hydrolyzes its bound ATP, resulting in the formation of a stable complex. GrpE releases ADP from DnaK; ATP binding to DnaK triggers the release of the substrate protein, thus completing the reaction cycle. Several rounds of ATP-dependent interactions between DnaJ, DnaK and GrpE are required for fully efficient folding. Also involved, together with DnaK and GrpE, in the DNA replication of plasmids through activation of initiation proteins. The polypeptide is Chaperone protein DnaJ (Bordetella parapertussis (strain 12822 / ATCC BAA-587 / NCTC 13253)).